A 751-amino-acid chain; its full sequence is Autophagy-related protein 9 (751 aa).

Topologically, residues 1–21 (MRKLCGNGSTSMISTDSYKNT) are cytoplasmic. A helical transmembrane segment spans residues 22 to 42 (TFFVIAFSTFLISCIDYTKLF). The Lumenal segment spans residues 43-71 (SSLSTPEAVGRLEDVLIGQCITKGSFAHT). Residues 72-92 (LFLIILSAFFIFQVANFAMSV) traverse the membrane as a helical segment. Residues 93–276 (PRLLDMYRFY…KDLVQGLRRR (184 aa)) lie on the Cytoplasmic side of the membrane. Residues 277-297 (FVFMGILNAIFAPFIILYLLI) lie within the membrane without spanning it. Residues 298 to 365 (YSFFRYFEEY…PKERTALVMR (68 aa)) are Cytoplasmic-facing. The chain crosses the membrane as a helical span at residues 366–386 (FVAFVAGSFAAVLLVASLIDP). The Lumenal portion of the chain corresponds to 387 to 398 (DLFLHFEITPHR). Residues 399–419 (TVLFYLGVFGSVLAISRGMVP) traverse the membrane as a helical segment. Over 420–465 (QENMVFDPEASLNEVVRWTHYLPVEWRGQLHSQMVHQEFSKLFALK) the chain is Cytoplasmic. Residues 466 to 486 (IMIFFSELLSVILTPFILFFS) lie within the membrane without spanning it. Residues 487-751 (LPPCAAAIID…DDGVQIDIKQ (265 aa)) are Cytoplasmic-facing. 2 disordered regions span residues 528–584 (NRPE…DWRS) and 676–751 (AKSS…DIKQ). The segment covering 544–557 (DSGGGGGGGGGGFA) has biased composition (gly residues). Residues 563–576 (RQTTRRAASASPSR) show a composition bias toward polar residues. Basic and acidic residues-rich tracts occupy residues 708-727 (EGDK…KTDG) and 735-751 (EHGR…DIKQ).

The protein belongs to the ATG9 family. Homotrimer; forms a homotrimer with a central pore that forms a path between the two membrane leaflets. Post-translationally, phosphorylated by ATG1. ATG1 phosphorylation is required for preautophagosome elongation.

The protein localises to the preautophagosomal structure membrane. It is found in the cytoplasmic vesicle membrane. Its subcellular location is the golgi apparatus membrane. It localises to the endoplasmic reticulum membrane. It carries out the reaction a 1,2-diacyl-sn-glycero-3-phosphocholine(in) = a 1,2-diacyl-sn-glycero-3-phosphocholine(out). The catalysed reaction is a 1,2-diacyl-sn-glycero-3-phospho-L-serine(in) = a 1,2-diacyl-sn-glycero-3-phospho-L-serine(out). The enzyme catalyses a 1,2-diacyl-sn-glycero-3-phosphoethanolamine(in) = a 1,2-diacyl-sn-glycero-3-phosphoethanolamine(out). It catalyses the reaction a 1,2-diacyl-sn-glycero-3-phospho-(1D-myo-inositol-3-phosphate)(in) = a 1,2-diacyl-sn-glycero-3-phospho-(1D-myo-inositol-3-phosphate)(out). Functionally, phospholipid scramblase involved in autophagy and cytoplasm to vacuole transport (Cvt) vesicle formation. Cycles between the preautophagosomal structure/phagophore assembly site (PAS) and the cytoplasmic vesicle pool and supplies membrane for the growing autophagosome. Lipid scramblase activity plays a key role in preautophagosomal structure/phagophore assembly by distributing the phospholipids that arrive through ATG2 from the cytoplasmic to the luminal leaflet of the bilayer, thereby driving autophagosomal membrane expansion. Required for mitophagy. Also involved in endoplasmic reticulum-specific autophagic process and is essential for the survival of cells subjected to severe ER stress. Different machineries are required for anterograde trafficking to the PAS during either the Cvt pathway or bulk autophagy and for retrograde trafficking. This Cryptococcus gattii (Filobasidiella gattii) protein is Autophagy-related protein 9 (ATG9).